The following is a 226-amino-acid chain: ATP synthase subunit a 1 (226 aa).

Transmembrane regions (helical) follow at residues 20 to 40 (LTIV…WLIT), 78 to 98 (YLPF…CTVI), 113 to 133 (ALAL…SGLV), 174 to 194 (MILV…MNIL), and 196 to 216 (LLTG…YIAA).

The protein belongs to the ATPase A chain family. F-type ATPases have 2 components, CF(1) - the catalytic core - and CF(0) - the membrane proton channel. CF(1) has five subunits: alpha(3), beta(3), gamma(1), delta(1), epsilon(1). CF(0) has four main subunits: a, b, b' and c.

It localises to the cell inner membrane. Functionally, key component of the proton channel; it plays a direct role in the translocation of protons across the membrane. The protein is ATP synthase subunit a 1 of Chlorobaculum parvum (strain DSM 263 / NCIMB 8327) (Chlorobium vibrioforme subsp. thiosulfatophilum).